Reading from the N-terminus, the 462-residue chain is Calcitonin gene-related peptide type 1 receptor (462 aa).

The signal sequence occupies residues 1-22; it reads MEKKFFLSFLFLLPFFMILVIA. The Extracellular portion of the chain corresponds to 23–140; that stretch reads ESEEENPDDL…NTHEKVKTAL (118 aa). 3 cysteine pairs are disulfide-bonded: C49–C75, C66–C106, and C89–C128. N-linked (GlcNAc...) asparagine glycans are attached at residues N67, N119, and N124. The chain crosses the membrane as a helical span at residues 141–165; that stretch reads NLFYLTIIGHVLSIASLLISLGIFF. Topologically, residues 166–176 are cytoplasmic; it reads YFKSLSCQRIT. Residues 177–199 form a helical membrane-spanning segment; it reads LHKNLFFSFVCNSVITIIHLTAV. The Extracellular segment spans residues 200 to 210; it reads ANNQALVATNP. The helical transmembrane segment at 211-239 threads the bilayer; it reads VSCKVSQFIHLYLMGCNYFWMLCEGIYLH. Topologically, residues 240 to 253 are cytoplasmic; it reads TLVVVAVFAEKQHL. The chain crosses the membrane as a helical span at residues 254–274; it reads MWYYFLGWGFPLIPACIHAVA. The Extracellular segment spans residues 275-290; the sequence is RRLYYNDNCWISSDTQ. Residues 289 to 290 form a required for RAMP3 interaction region; the sequence is TQ. Residues 291–315 form a helical membrane-spanning segment; that stretch reads LLYIIHGPICAALLVNLFFLLNIVR. Residues 316 to 330 are Cytoplasmic-facing; that stretch reads VLITKLKVTHQAESN. The chain crosses the membrane as a helical span at residues 331 to 352; sequence LYMKAVRATLILVPLLGIEFVL. Topologically, residues 353-367 are extracellular; that stretch reads IPWRPEGKIAEEIYD. The helical transmembrane segment at 368–388 threads the bilayer; the sequence is YIINILMHYQGLLVSTIFCFF. Over 389–462 the chain is Cytoplasmic; that stretch reads NGEVQAILRR…VVIKPEKLYD (74 aa). 2 positions are modified to phosphoserine: S421 and S446.

This sequence belongs to the G-protein coupled receptor 2 family. As to quaternary structure, heterodimer of CALCRL and RAMP1; the receptor complex functions as CGRP receptor. Heterodimer of CALCRL and RAMP2 or CALCRL and RAMP3; the complexes function as adrenomedullin receptor.

Its subcellular location is the cell membrane. In terms of biological role, g protein-coupled receptor which specificity is determined by its interaction with receptor-activity-modifying proteins (RAMPs). Together with RAMP1, form the receptor complex for calcitonin-gene-related peptides CALCA/CGRP1 and CALCB/CGRP2. Together with RAMP2 or RAMP3, function as receptor complexes for adrenomedullin (ADM and ADM2). Ligand binding causes a conformation change that triggers signaling via guanine nucleotide-binding proteins (G proteins) and modulates the activity of downstream effectors. Activates cAMP-dependent pathway. This chain is Calcitonin gene-related peptide type 1 receptor (CALCRL), found in Bos taurus (Bovine).